The following is a 260-amino-acid chain: Tropinone reductase homolog At1g07450 (260 aa).

14 to 38 lines the NADP(+) pocket; it reads LVTGGSKGIGYAIVEELVGFGARVH. Ser147 contacts substrate. Tyr159 serves as the catalytic Proton acceptor.

The protein belongs to the short-chain dehydrogenases/reductases (SDR) family. SDR65C subfamily.

In Arabidopsis thaliana (Mouse-ear cress), this protein is Tropinone reductase homolog At1g07450.